The sequence spans 329 residues: MSSAPHIPVLGREAIDHLAPREGGIYVDATFGAGGYSRAILDVPGTRLIAIDRDRTAIAGGAELVERSAGRLTLVEDRFSHLADVCAAQGVDAVDGVVMDVGVSSMQLDQAGRGFSFRLDGPLDMRMGQAGPTAADVVARASEADLADIIYLLGEERHSRRVARAIVADRQETPFTTTRALADLVGRVVRSKPGDIHPATRTFQALRIFVNEELEELQTALTAAERVLKPGGRLVVVSFHSLEDRIVKNFLAERSKTGGGSRHLPEVAQTAPSFQLLTRRPVVAGEDEVAHNPRARSAKLRAAERTSAPAHKDDQSSSWPRLSDVMRGG.

S-adenosyl-L-methionine-binding positions include 34–36 (GGY), D52, F79, D100, and Q107. The interval 285 to 329 (GEDEVAHNPRARSAKLRAAERTSAPAHKDDQSSSWPRLSDVMRGG) is disordered.

This sequence belongs to the methyltransferase superfamily. RsmH family.

It is found in the cytoplasm. It catalyses the reaction cytidine(1402) in 16S rRNA + S-adenosyl-L-methionine = N(4)-methylcytidine(1402) in 16S rRNA + S-adenosyl-L-homocysteine + H(+). Specifically methylates the N4 position of cytidine in position 1402 (C1402) of 16S rRNA. This Bradyrhizobium diazoefficiens (strain JCM 10833 / BCRC 13528 / IAM 13628 / NBRC 14792 / USDA 110) protein is Ribosomal RNA small subunit methyltransferase H.